Here is a 323-residue protein sequence, read N- to C-terminus: Aldo-keto reductase family 1 member C13 (323 aa).

NAD(+) is bound by residues 20-24, Asp-50, and Tyr-55; that span reads GFGTY. The active-site Proton donor is the Tyr-55. His-117 serves as a coordination point for substrate. NAD(+) is bound by residues 166–167, Gln-190, 216–224, and 270–280; these read SN, YGALGTQRY, and QSFKENEMREN.

The protein belongs to the aldo/keto reductase family.

Functionally, catalyzes the dehydrogenation of 17-beta-hydroxysteroids. May also exhibit significant activity with a variety of cyclic and alicyclic alcohols. Uses both NAD and NADP, but the activity is much greater with NAD than with NADP. This Mus musculus (Mouse) protein is Aldo-keto reductase family 1 member C13 (Akr1c13).